Reading from the N-terminus, the 120-residue chain is ATP-dependent Clp protease adapter protein ClpS (120 aa).

Residues 1–25 (MHARSEIRLTFNQDRPQSNEDDGSG) form a disordered region.

Belongs to the ClpS family. As to quaternary structure, binds to the N-terminal domain of the chaperone ClpA.

Involved in the modulation of the specificity of the ClpAP-mediated ATP-dependent protein degradation. This is ATP-dependent Clp protease adapter protein ClpS from Pseudomonas putida (strain W619).